The sequence spans 156 residues: Endoribonuclease YbeY (156 aa).

The Zn(2+) site is built by His117, His121, and His127.

Belongs to the endoribonuclease YbeY family. Requires Zn(2+) as cofactor.

Its subcellular location is the cytoplasm. Functionally, single strand-specific metallo-endoribonuclease involved in late-stage 70S ribosome quality control and in maturation of the 3' terminus of the 16S rRNA. This chain is Endoribonuclease YbeY, found in Herminiimonas arsenicoxydans.